We begin with the raw amino-acid sequence, 508 residues long: Rhamnogalacturonan I rhamnosyltransferase 1 (508 aa).

A helical; Signal-anchor for type II membrane protein membrane pass occupies residues 41-63 (LWMIRAVTVLLLWSCFVHLMALG). 3 N-linked (GlcNAc...) asparagine glycosylation sites follow: N136, N202, and N223. Position 277–279 (277–279 (HLR)) interacts with substrate. An N-linked (GlcNAc...) asparagine glycan is attached at N391.

It belongs to the glycosyltransferase GT106 family. In terms of tissue distribution, highly expressed in siliques. Expressed in stems and flowers. Expressed at low levels in roots and rosette leaves.

It is found in the golgi apparatus membrane. It catalyses the reaction alpha-D-galacturonosyl-[(1-&gt;2)-alpha-L-rhamnosyl-(1-&gt;4)-alpha-D-galacturonosyl](n) + UDP-beta-L-rhamnose = [(1-&gt;2)-alpha-L-rhamnosyl-(1-&gt;4)-alpha-D-galacturonosyl](n+1) + UDP + H(+). Its pathway is glycan metabolism; pectin biosynthesis. In terms of biological role, glycosyltransferase involved in the formation of rhamnogalacturonan I (RG-I) oligosaccharides in the seed coat mucilage, which is a specialized cell wall with abundant RG-I. Transfers the rhamnose residue from UDP-beta-L-rhamnose to RG-I oligosaccharides. Prefers RG-I oligosaccharides with a degree of polymerization of 5 or larger than 5. Does not act on oligosaccharides with a degree of polymerization of 4 or smaller than 4. Does not require metal ions for its activity. This chain is Rhamnogalacturonan I rhamnosyltransferase 1, found in Arabidopsis thaliana (Mouse-ear cress).